Consider the following 427-residue polypeptide: Endothelin-1 receptor (427 aa).

The signal sequence occupies residues 1 to 20 (METFCFRVSFWVALLGCVIS). At 21 to 80 (DNPESHSTNLSTHVDDFTTFRGTEFSLVVTTHRPTNLALPSNGSMHNYCPQQTKITSAFK) the chain is on the extracellular side. Asn29 and Asn62 each carry an N-linked (GlcNAc...) asparagine glycan. Residues 81–102 (YINTVISCTIFIVGMVGNATLL) traverse the membrane as a helical segment. Residues 103 to 112 (RIIYQNKCMR) lie on the Cytoplasmic side of the membrane. Residues 113–132 (NGPNALIASLALGDLIYVVI) traverse the membrane as a helical segment. Topologically, residues 133–159 (DLPINVFKLLAGRWPFENHDFGVFLCK) are extracellular. The cysteines at positions 158 and 239 are disulfide-linked. A helical membrane pass occupies residues 160–181 (LFPFLQKSSVGITVLNLCALSV). The Cytoplasmic portion of the chain corresponds to 182–205 (DRYRAVASWSRVQGIGIPLVTAIE). A helical transmembrane segment spans residues 206 to 229 (IVSIWILSFILAIPEAIGFVMVPF). The Extracellular segment spans residues 230–256 (EYKGEEHKTCMLNATSKFMEFYQDVKD). A helical transmembrane segment spans residues 257–278 (WWLFGFYFCMPLVCTAIFYTLM). Residues 279-306 (TCEMLNRRNGSLRIALSEHLKQRREVAK) lie on the Cytoplasmic side of the membrane. A helical membrane pass occupies residues 307 to 328 (TVFCLVVIFALCWFPLHLSRIL). Topologically, residues 329–347 (KKTVYDEMDKNRCELLSFL) are extracellular. Residues 348–372 (LLMDYIGINLATMNSCINPIALYFV) form a helical membrane-spanning segment. Residues 373–427 (SKKFKNCFQSCLCCCCYQSKSLMTSVPMNGTSIQWKNHEQNNHNTERSSHKDSIN) lie on the Cytoplasmic side of the membrane. At Ser425 the chain carries Phosphoserine.

Belongs to the G-protein coupled receptor 1 family. Endothelin receptor subfamily. EDNRA sub-subfamily. In terms of assembly, interacts with HDAC7 and KAT5.

It is found in the cell membrane. Functionally, receptor for endothelin-1. Mediates its action by association with G proteins that activate a phosphatidylinositol-calcium second messenger system. The rank order of binding affinities for ET-A is: ET1 &gt; ET2 &gt;&gt; ET3. In Sus scrofa (Pig), this protein is Endothelin-1 receptor.